We begin with the raw amino-acid sequence, 494 residues long: 5'-3' exonuclease PLD3 (494 aa).

Residues 1 to 37 (MNPKVEYKQIQSHDEAENQVLQHECHQAKARKYYRCA) are Cytoplasmic-facing. A helical; Signal-anchor for type II membrane protein membrane pass occupies residues 38–58 (VVIAIIITLLFCVLASQLLLF). Over 59-494 (PLFSITSQTT…LSSWKEKCIF (436 aa)) the chain is Lumenal. N-linked (GlcNAc...) asparagine glycosylation is present at asparagine 100. Positions 198–225 (TDGVLHTKFWVVDSEHFYIGSANMDWRS) constitute a PLD phosphodiesterase 1 domain. Residues histidine 203, lysine 205, and aspartate 210 contribute to the active site. 5 N-linked (GlcNAc...) asparagine glycosylation sites follow: asparagine 238, asparagine 260, asparagine 270, asparagine 286, and asparagine 389. In terms of domain architecture, PLD phosphodiesterase 2 spans 413-439 (YARVNHNKYMVTDRVAYIGTSNWSGDY). Active-site residues include histidine 418, lysine 420, and aspartate 425. 3 N-linked (GlcNAc...) asparagine glycosylation sites follow: asparagine 434, asparagine 451, and asparagine 477.

The protein belongs to the phospholipase D family. N-glycosylated. In terms of processing, proteolytically processed to a soluble form that is stable within endosomes and lysosomes. During transport through the secretory pathway becomes proteolysed by cysteine proteases, thereby releasing a stable soluble lysosomal lumenal polypeptide, whereas the transmembrane-bound fragment is rapidly degraded. Its transport route to lysosomes involves ubiquitination and the ESCRT complex. Post-translationally, ubiquitinated. Ubiquitination mediates sorting into lysosomes.

It is found in the endoplasmic reticulum membrane. It localises to the lysosome lumen. Its subcellular location is the early endosome membrane. The protein resides in the late endosome membrane. The protein localises to the golgi apparatus membrane. It is found in the endosome membrane. The enzyme catalyses Exonucleolytic cleavage in the 5'- to 3'-direction to yield nucleoside 3'-phosphates.. Functionally, 5'-&gt;3' DNA exonuclease which digests single-stranded DNA (ssDNA). Regulates inflammatory cytokine responses via the degradation of nucleic acids, by reducing the concentration of ssDNA able to stimulate TLR9, a nucleotide-sensing receptor in collaboration with PLD4. May be important in myotube formation. Plays a role in lysosomal homeostasis. Involved in the regulation of endosomal protein sorting. The sequence is that of 5'-3' exonuclease PLD3 (pld3) from Xenopus tropicalis (Western clawed frog).